The chain runs to 463 residues: uncharacterized protein (463 aa).

It belongs to the mycobacterial PPE family.

This is an uncharacterized protein from Mycobacterium tuberculosis (strain ATCC 25618 / H37Rv).